The primary structure comprises 817 residues: Actin filament-associated protein 1-like 2 (817 aa).

At Tyr56 the chain carries Phosphotyrosine. Positions His63–Pro164 are disordered. A compositionally biased stretch (acidic residues) spans Tyr123 to Glu139. PH domains lie at Asp175–Gly271 and Ser353–Gly447. Ser408 bears the Phosphoserine mark. Tyr413 is modified (phosphotyrosine). Position 484 is a phosphoserine (Ser484). Positions Thr512 to Pro528 are enriched in low complexity. 2 disordered regions span residues Thr512–Lys657 and Gly754–Ala786. Positions Glu652 to Ala748 form a coiled coil. The span at Gly754–Glu763 shows a compositional bias: polar residues. The segment covering Pro767–Pro782 has biased composition (low complexity).

In terms of assembly, interacts with SRC. Interacts with LCK when tyrosine phosphorylated. Tyrosine phosphorylated (by SRC).

The protein localises to the cytoplasm. In terms of biological role, may play a role in a signaling cascade by enhancing the kinase activity of SRC. Contributes to SRC-regulated transcription activation. The protein is Actin filament-associated protein 1-like 2 (AFAP1L2) of Bos taurus (Bovine).